A 110-amino-acid polypeptide reads, in one-letter code: Snake venom vascular endothelial growth factor toxin ICPP (110 aa).

A Pyrrolidone carboxylic acid modification is found at glutamine 1. Intrachain disulfides connect cysteine 14–cysteine 56, cysteine 45–cysteine 91, and cysteine 49–cysteine 93.

As to quaternary structure, homodimer; disulfide-linked. Interacts with high affinity with KDR/VEGFR-2, and with a lower affinity with neuropilin-1 (NRP1) and neuropilin-2 (NRP2). In terms of tissue distribution, expressed by the venom gland.

Its subcellular location is the secreted. Snake venom VEGFs may contribute to venom dispersion and prey subjugation by inducing vascular permeability and hypotension. This protein increases vascular permeability and angiogenesis probably through VEGF receptor (KDR/VEGFR-2) signaling. Induces DNA synthesis in human umbilical vein endothelial cells, and promotes mouse embryonic stem cell proliferation and differentiation. It may also induce a drastic hypotensive effect after intravenous injection. The hypotension is mediated by nitric oxide (NO), which is produced by VEGF-activated endothelium NO synthase. The polypeptide is Snake venom vascular endothelial growth factor toxin ICPP (Macrovipera lebetinus (Levantine viper)).